The primary structure comprises 430 residues: Glycine reductase complex component B subunits alpha and beta (430 aa).

C242 acts as the Schiff-base intermediate with substrate; via pyruvic acid in catalysis. Pyruvic acid (Cys) is present on C242.

In terms of assembly, heterohexamer of two alpha, two beta and two gamma subunits. Component of the glycine reductase complex, together with components A and C. PB is substrate specific. The peptide chain is cleaved into beta and alpha chains, and the alpha chain N-terminal cysteine is deaminated and oxidized to form a reactive pyruvoyl group.

The catalysed reaction is acetyl phosphate + [thioredoxin]-disulfide + NH4(+) + H2O = [thioredoxin]-dithiol + glycine + phosphate + H(+). In terms of biological role, in the first step of glycine reductase, the substrate is bound to component PB via a Schiff base intermediate. Then the PB-activated substrate is nucleophilically attacked by the selenol anion of component PA to transform it to a carboxymethylated selenoether and the respective amine. By action of component PC, acetyl phosphate is formed, leaving component PA in its oxidized state. Finally component PA becomes reduced by the thioredoxin system to start a new catalytic cycle of reductive deamination. The protein is Glycine reductase complex component B subunits alpha and beta (grdE) of Acetoanaerobium sticklandii (strain ATCC 12662 / DSM 519 / JCM 1433 / CCUG 9281 / NCIMB 10654 / HF) (Clostridium sticklandii).